A 138-amino-acid polypeptide reads, in one-letter code: Acidic phospholipase A2 pgPLA 1b/pgPLA 2b (138 aa).

The first 16 residues, Met-1–Gly-16, serve as a signal peptide directing secretion. 7 disulfides stabilise this stretch: Cys-42-Cys-131, Cys-44-Cys-60, Cys-59-Cys-111, Cys-65-Cys-138, Cys-66-Cys-104, Cys-73-Cys-97, and Cys-91-Cys-102. Tyr-43, Gly-45, and Gly-47 together coordinate Ca(2+). His-63 is an active-site residue. Asp-64 contributes to the Ca(2+) binding site. Asp-105 is an active-site residue.

This sequence belongs to the phospholipase A2 family. Group II subfamily. D49 sub-subfamily. Ca(2+) serves as cofactor. Expressed by the venom gland.

It localises to the secreted. The catalysed reaction is a 1,2-diacyl-sn-glycero-3-phosphocholine + H2O = a 1-acyl-sn-glycero-3-phosphocholine + a fatty acid + H(+). PLA2 catalyzes the calcium-dependent hydrolysis of the 2-acyl groups in 3-sn-phosphoglycerides. This is Acidic phospholipase A2 pgPLA 1b/pgPLA 2b from Protobothrops flavoviridis (Habu).